The following is a 226-amino-acid chain: E3 ubiquitin-protein ligase RNF186 (226 aa).

The RING-type zinc-finger motif lies at 39 to 85; that stretch reads CLVCREPYNCARSPKLLSCQHTFCAVCLKLLLYVQEDTWSIPCPLCR. The next 2 helical transmembrane spans lie at 157–177 and 179–199; these read HLLLLALVIVLILPFIYPGVI and WVLAFVIALALLMSTLFCCHP.

As to quaternary structure, interacts with BNIP1. Polyubiquitinated. 'Lys-29'-linked autoubiquitination leads to proteasomal degradation.

Its subcellular location is the endoplasmic reticulum membrane. It catalyses the reaction S-ubiquitinyl-[E2 ubiquitin-conjugating enzyme]-L-cysteine + [acceptor protein]-L-lysine = [E2 ubiquitin-conjugating enzyme]-L-cysteine + N(6)-ubiquitinyl-[acceptor protein]-L-lysine.. Its pathway is protein modification; protein ubiquitination. Functionally, E3 ubiquitin protein ligase that is part of an apoptotic signaling pathway activated by endoplasmic reticulum stress. Stimulates the expression of proteins specific of the unfolded protein response (UPR), ubiquitinates BNIP1 and regulates its localization to the mitochondrion and induces calcium release from the endoplasmic reticulum that ultimately leads to cell apoptosis. Plays a role in the maintenance of intestinal homeostasis and clearance of enteric pathogens. Upon NOD2 stimulation, ubiquitinates the ER stress sensor activating transcription factor 6/ATF6 and promotes the unfolded protein response UPR. Participates in basal level of autophagy maintenance by regulating the ubiquitination of EPHB2. Upon stimulation by ligand EFNB1, ubiquitinates EPHB2 and further recruits MAP1LC3B for autophagy induction. Controls nutrient sensing by ubiquitinating Sestrin-2/SESN2, which is an intracellular sensor of cytosolic leucine and inhibitor of mTORC1 activity. This Mus musculus (Mouse) protein is E3 ubiquitin-protein ligase RNF186.